The primary structure comprises 124 residues: Alpha-endosulfine (124 aa).

S74 is modified (phosphoserine; by GWL). The tract at residues 99-124 is disordered; that stretch reads VTGDHIPTPQDLPQRKNTILTSKLAG. Over residues 113–124 the composition is skewed to polar residues; the sequence is RKNTILTSKLAG.

This sequence belongs to the endosulfine family. Phosphorylation at Ser-74 by gwl during mitosis is essential for interaction with ppp2r2d (PR55-delta) and subsequent inactivation of PP2A.

Its subcellular location is the cytoplasm. Functionally, protein phosphatase inhibitor that specifically inhibits protein phosphatase 2A (PP2A) during mitosis. When phosphorylated at Ser-67 during mitosis, specifically interacts with ppp2r2d (PR55-delta) and inhibits its activity, leading to inactivation of PP2A, an essential condition to keep cyclin-B1-CDK1 activity high during M phase. This is Alpha-endosulfine (ensa) from Danio rerio (Zebrafish).